The chain runs to 100 residues: MNGASPAHSLVSTTAVAGGGGSSGAAAGLDDFHFPPDIPSMQERKDEAMRVLKADLMTELDKEVKSLEEDSWMFEGPRSRIHLISRRGNFLKKGGEVKLW.

The tract at residues Met-1–Ser-40 is disordered.

Interacts with CDC27B and CYCA2-3. As to expression, expressed in embryos, germinating seeds, hypocotyls and pollen grains.

Functionally, plays an important role in organ size control. Acts as negative regulator of the anaphase-promoting complex/cyclosome (APC/C). Regulates cell proliferation during early development by targeting CYCA2-3 for APC/C-mediated degradation. Required for mitosis I during pollen microspore development. This chain is Protein SAMBA, found in Arabidopsis thaliana (Mouse-ear cress).